The chain runs to 264 residues: Major prion protein (264 aa).

A signal peptide spans Met-1–Cys-24. An interaction with GRB2, ERI3 and SYN1 region spans residues Lys-25–Ala-241. Positions Pro-28–Thr-118 are disordered. 6 repeat units span residues Pro-54 to Gln-62, Pro-63 to Gln-70, Pro-71 to Gln-78, Pro-79 to Gln-86, Pro-87 to Gln-94, and Pro-95 to Gln-103. A 6 X 8 AA tandem repeats of P-H-G-G-G-W-G-Q region spans residues Pro-54–Gln-103. Over residues Gln-55 to His-107 the composition is skewed to gly residues. His-72, Gly-73, Gly-74, His-80, Gly-81, Gly-82, His-88, Gly-89, Gly-90, His-96, Gly-98, and Gly-99 together coordinate Cu(2+). Residues Cys-190 and Cys-225 are joined by a disulfide bond. N-linked (GlcNAc...) asparagine glycosylation is found at Asn-192 and Asn-208. Ala-241 carries the GPI-anchor amidated alanine lipid modification. A propeptide spans Ser-242–Gly-264 (removed in mature form).

This sequence belongs to the prion family. As to quaternary structure, monomer and homodimer. Has a tendency to aggregate into amyloid fibrils containing a cross-beta spine, formed by a steric zipper of superposed beta-strands. Soluble oligomers may represent an intermediate stage on the path to fibril formation. Copper binding may promote oligomerization. Interacts with GRB2, APP, ERI3/PRNPIP and SYN1. Mislocalized cytosolically exposed PrP interacts with MGRN1; this interaction alters MGRN1 subcellular location and causes lysosomal enlargement. Interacts with KIAA1191.

The protein localises to the cell membrane. It is found in the golgi apparatus. Its function is as follows. Its primary physiological function is unclear. Has cytoprotective activity against internal or environmental stresses. May play a role in neuronal development and synaptic plasticity. May be required for neuronal myelin sheath maintenance. May play a role in iron uptake and iron homeostasis. Soluble oligomers are toxic to cultured neuroblastoma cells and induce apoptosis (in vitro). Association with GPC1 (via its heparan sulfate chains) targets PRNP to lipid rafts. Also provides Cu(2+) or Zn(2+) for the ascorbate-mediated GPC1 deaminase degradation of its heparan sulfate side chains. The protein is Major prion protein (PRNP) of Boselaphus tragocamelus (Nilgai).